A 485-amino-acid chain; its full sequence is Transcription factor E2FA (485 aa).

The span at 1-11 (MSGVVRSSPGS) shows a compositional bias: low complexity. Disordered regions lie at residues 1-69 (MSGV…SNNN) and 114-159 (SGFT…SPIT). Residues 12-26 (SQPPPPPPHHPPSSP) are compositionally biased toward pro residues. Over residues 114-125 (SGFTNIPSSPCQ) the composition is skewed to polar residues. Residues 129-141 (KGGRVNIKSKAKG) show a composition bias toward basic residues. A compositionally biased stretch (polar residues) spans 142-159 (NKSTPQTPISTNAGSPIT). The DNA-binding element occupies 167 to 232 (RYDSSLGLLT…PFKNRILWKG (66 aa)). A coiled-coil region spans residues 245–286 (SVLQLQAEIENLALEEQALDNQIRQTEERLRDLSENEKNQKW). Residues 249–277 (LQAEIENLALEEQALDNQIRQTEERLRDL) are leucine-zipper. The segment at 435-450 (DYWLLSNAEISMTDIW) is retinoblastoma protein binding.

The protein belongs to the E2F/DP family. In terms of assembly, heterodimer with DP proteins. Interacts (via dimerization domain) preferentially with DPA, but also with DPB. Interacts with maize retinoblastoma-related protein RBR1. No interaction with E2FD. As to expression, highly expressed in the shoot apical meristem, emerging leaf primordia, and vascular tissues of young leaf primordia. Expressed in flowers, in epidermis and cortex of hypocotyls, and at lower levels in leaves.

The protein localises to the cytoplasm. It localises to the nucleus. Transcription activator that binds DNA cooperatively with DP proteins through the E2 recognition site, 5'-TTTC[CG]CGC-3' found in the promoter region of a number of genes whose products are involved in cell cycle regulation or in DNA replication. The binding of retinoblastoma-related proteins represses transactivation. Regulates gene expression both positively and negatively. Activates the expression of E2FB. Involved in the control of cell-cycle progression from G1 to S phase. Stimulates cell proliferation and delays differentiation. The chain is Transcription factor E2FA (E2FA) from Arabidopsis thaliana (Mouse-ear cress).